Here is a 27-residue protein sequence, read N- to C-terminus: AnmTX Sco 9a-1 (27 aa).

At Pro6 the chain carries Hydroxyproline. 2 disulfide bridges follow: Cys7-Cys18 and Cys10-Cys25.

In terms of biological role, has analgesic and anti-inflammatory activity in vivo. At a dose of 0.1 and 1 mg/kg, exhibits anti-inflammatory activity by reducing the volume of edema during 24 h better than the nonsteroidal anti-inflammatory drug, Diclofenac, at dose of 1 mg/kg in a mouse model of acute local lambda-carrageenan-induced inflammation. At a dose of 1 mg/kg, reduces the content of tumor necrosis factor-alpha (TNF-alpha). Demonstrates a significant analgesic effect on acute pain sensitivity in the carrageenan-induced thermal hyperalgesia model at doses of 0.1 and 1 mg/kg. Not toxic in mice, however stimulates exploratory motivation and active search behavior, and demonstrates an anti-anxiety effect. Does not exhibit any effect on currents of rat acid-sensing ion channels ASIC1a or ASIC3. The sequence is that of AnmTX Sco 9a-1 from Stomphia coccinea (Spotted swimming anemone).